The following is a 328-amino-acid chain: Malate dehydrogenase (328 aa).

11-17 (GAAGQIG) serves as a coordination point for NAD(+). Substrate is bound by residues Arg92 and Arg98. Residues Asn105, Gln112, and 129-131 (VGN) each bind NAD(+). Asn131 and Arg162 together coordinate substrate. His187 functions as the Proton acceptor in the catalytic mechanism.

Belongs to the LDH/MDH superfamily. MDH type 2 family.

It catalyses the reaction (S)-malate + NAD(+) = oxaloacetate + NADH + H(+). Functionally, catalyzes the reversible oxidation of malate to oxaloacetate. This chain is Malate dehydrogenase, found in Coxiella burnetii (strain CbuK_Q154) (Coxiella burnetii (strain Q154)).